The sequence spans 591 residues: Fanconi anemia group C protein homolog (591 aa).

In terms of assembly, belongs to the multisubunit FA complex composed of FANCA, FANCB, FANCC, FANCE, FANCF, FANCG, FANCL/PHF9 and FANCM. This complex may also include HSP70. Interacts with ZBTB32. Upon IFNG induction, interacts with STAT1. Interacts with CDK1. Interacts with EIF2AK2. Ubiquitous.

The protein resides in the nucleus. Its subcellular location is the cytoplasm. Its function is as follows. DNA repair protein that may operate in a postreplication repair or a cell cycle checkpoint function. May be implicated in interstrand DNA cross-link repair and in the maintenance of normal chromosome stability. Upon IFNG induction, may facilitate STAT1 activation by recruiting STAT1 to IFNGR1. The protein is Fanconi anemia group C protein homolog (Fancc) of Mus musculus (Mouse).